The sequence spans 183 residues: UPF0200 protein Memar_1556 (183 aa).

8-15 (GMPASGKG) is an ATP binding site.

Belongs to the UPF0200 family.

In Methanoculleus marisnigri (strain ATCC 35101 / DSM 1498 / JR1), this protein is UPF0200 protein Memar_1556.